An 88-amino-acid chain; its full sequence is FXYD domain-containing ion transport regulator 3 (88 aa).

Positions 1–20 are cleaved as a signal peptide; that stretch reads MQEFALSLLVLLAGLPTLDA. Residues 21–38 are Extracellular-facing; the sequence is NDPEDKDSPFYYDWHSLR. The helical transmembrane segment at 39–59 threads the bilayer; it reads VGGLICAGILCALGIIVLMSG. The Cytoplasmic portion of the chain corresponds to 60-88; it reads KCKCKFSQKPSHRPGDGPPLITPGSAHNC. Residues 66–88 are disordered; the sequence is SQKPSHRPGDGPPLITPGSAHNC.

Belongs to the FXYD family. Regulatory subunit of the sodium/potassium-transporting ATPase which is composed of a catalytic alpha subunit, a non-catalytic beta subunit and an additional regulatory subunit. Interacts with catalytic alpha subunit ATP1A1. Also interacts with non-catalytic beta subunit ATP1B1. Interacts with the alpha1-beta1, alpha2-beta1 and alpha3-beta1 NKA isozymes. In terms of processing, glutathionylated.

Its subcellular location is the cell membrane. Associates with and regulates the activity of the sodium/potassium-transporting ATPase (NKA) which transports Na(+) out of the cell and K(+) into the cell. Reduces glutathionylation of the NKA beta-1 subunit ATP1B1, thus reversing glutathionylation-mediated inhibition of ATP1B1. Induces a hyperpolarization-activated chloride current when expressed in Xenopus oocytes. The chain is FXYD domain-containing ion transport regulator 3 (Fxyd3) from Rattus norvegicus (Rat).